The sequence spans 116 residues: ATP synthase lipid-binding protein, mitochondrial (116 aa).

A mitochondrion-targeting transit peptide spans 1–24 (MYCQRLALPLTRSLLASRAPLALR). The helical transmembrane segment at 57–77 (VGVAGSGAGIGNVFGALVIGY) threads the bilayer. Lys-84 bears the N6,N6,N6-trimethyllysine mark. The helical transmembrane segment at 92–112 (ILGFALSEAMGLFCLTMGFMI) threads the bilayer.

This sequence belongs to the ATPase C chain family. F-type ATPases have 2 components, CF(1) - the catalytic core - and CF(0) - the membrane proton channel. CF(1) has five subunits: alpha(3), beta(3), gamma(1), delta(1), epsilon(1). CF(0) has three main subunits: a, b and c. In terms of processing, trimethylated by ATPSCKMT at Lys-84. Methylation may be required for proper incorporation of the C subunit into the ATP synthase complex and mitochondrial respiration.

It localises to the mitochondrion membrane. Mitochondrial membrane ATP synthase (F(1)F(0) ATP synthase or Complex V) produces ATP from ADP in the presence of a proton gradient across the membrane which is generated by electron transport complexes of the respiratory chain. F-type ATPases consist of two structural domains, F(1) - containing the extramembraneous catalytic core and F(0) - containing the membrane proton channel, linked together by a central stalk and a peripheral stalk. During catalysis, ATP synthesis in the catalytic domain of F(1) is coupled via a rotary mechanism of the central stalk subunits to proton translocation. Part of the complex F(0) domain. A homomeric c-ring of probably 10 subunits is part of the complex rotary element. This Caenorhabditis briggsae protein is ATP synthase lipid-binding protein, mitochondrial.